The primary structure comprises 164 residues: NADH-quinone oxidoreductase subunit I (164 aa).

2 consecutive 4Fe-4S ferredoxin-type domains span residues 55-85 and 95-124; these read LRRY…IDAE and TRYD…EGPN. Positions 65, 68, 71, 75, 104, 107, 110, and 114 each coordinate [4Fe-4S] cluster.

The protein belongs to the complex I 23 kDa subunit family. In terms of assembly, NDH-1 is composed of 14 different subunits. Subunits NuoA, H, J, K, L, M, N constitute the membrane sector of the complex. Requires [4Fe-4S] cluster as cofactor.

The protein localises to the cell inner membrane. It carries out the reaction a quinone + NADH + 5 H(+)(in) = a quinol + NAD(+) + 4 H(+)(out). NDH-1 shuttles electrons from NADH, via FMN and iron-sulfur (Fe-S) centers, to quinones in the respiratory chain. The immediate electron acceptor for the enzyme in this species is believed to be ubiquinone. Couples the redox reaction to proton translocation (for every two electrons transferred, four hydrogen ions are translocated across the cytoplasmic membrane), and thus conserves the redox energy in a proton gradient. The chain is NADH-quinone oxidoreductase subunit I from Roseobacter denitrificans (strain ATCC 33942 / OCh 114) (Erythrobacter sp. (strain OCh 114)).